Reading from the N-terminus, the 227-residue chain is Ribonuclease 3 (227 aa).

In terms of domain architecture, RNase III spans 3–130 (TNAISKIIKY…LIGAIYLDGG (128 aa)). Glutamate 43 contributes to the Mg(2+) binding site. Aspartate 47 is a catalytic residue. Mg(2+) contacts are provided by asparagine 116 and glutamate 119. The active site involves glutamate 119. Residues 155-224 (DAKTILQEWA…ASLMLAKINY (70 aa)) enclose the DRBM domain.

It belongs to the ribonuclease III family. Homodimer. It depends on Mg(2+) as a cofactor.

The protein localises to the cytoplasm. It catalyses the reaction Endonucleolytic cleavage to 5'-phosphomonoester.. Its function is as follows. Digests double-stranded RNA. Involved in the processing of primary rRNA transcript to yield the immediate precursors to the large and small rRNAs (23S and 16S). Processes some mRNAs, and tRNAs when they are encoded in the rRNA operon. Processes pre-crRNA and tracrRNA of type II CRISPR loci if present in the organism. The polypeptide is Ribonuclease 3 (Ehrlichia ruminantium (strain Welgevonden)).